We begin with the raw amino-acid sequence, 235 residues long: Ion-translocating oxidoreductase complex subunit E (235 aa).

Transmembrane regions (helical) follow at residues 63–83, 93–113, 117–137, 152–172, and 206–226; these read LGLG…ISLF, IPIY…LMNA, TLYQ…IIIG, IWDG…LGAL, and SFLL…LLAI.

The protein belongs to the NqrDE/RnfAE family. In terms of assembly, the complex is composed of six subunits: RnfA, RnfB, RnfC, RnfD, RnfE and RnfG.

The protein localises to the cell inner membrane. In terms of biological role, part of a membrane-bound complex that couples electron transfer with translocation of ions across the membrane. The polypeptide is Ion-translocating oxidoreductase complex subunit E (Haemophilus influenzae (strain 86-028NP)).